The chain runs to 921 residues: Isoleucine--tRNA ligase (921 aa).

The 'HIGH' region signature appears at 57 to 67 (PYANGDIHMGH). Glutamate 552 contributes to the L-isoleucyl-5'-AMP binding site. Positions 593–597 (KMSKS) match the 'KMSKS' region motif. Lysine 596 serves as a coordination point for ATP. 4 residues coordinate Zn(2+): cysteine 888, cysteine 891, cysteine 908, and cysteine 911.

It belongs to the class-I aminoacyl-tRNA synthetase family. IleS type 1 subfamily. Monomer. Zn(2+) serves as cofactor.

The protein resides in the cytoplasm. It carries out the reaction tRNA(Ile) + L-isoleucine + ATP = L-isoleucyl-tRNA(Ile) + AMP + diphosphate. Functionally, catalyzes the attachment of isoleucine to tRNA(Ile). As IleRS can inadvertently accommodate and process structurally similar amino acids such as valine, to avoid such errors it has two additional distinct tRNA(Ile)-dependent editing activities. One activity is designated as 'pretransfer' editing and involves the hydrolysis of activated Val-AMP. The other activity is designated 'posttransfer' editing and involves deacylation of mischarged Val-tRNA(Ile). This chain is Isoleucine--tRNA ligase, found in Bacillus cereus (strain B4264).